Reading from the N-terminus, the 156-residue chain is Acanthoscurrin-1 (156 aa).

The first 23 residues, 1-23 (MAFRMKLVVCIVLLSTLAVMSSA), serve as a signal peptide directing secretion. At Lys155 the chain carries Lysine amide.

As to expression, expressed in hemocytes and secreted into the plasma following bacterial immune challenge.

It localises to the secreted. Functionally, antimicrobial protein. Strong activity against the Gram-negative bacterium E.coli SBS363 and yeast C.albicans. No detectable activity against the Gram-positive bacterium M.luteus. This Acanthoscurria gomesiana (Tarantula spider) protein is Acanthoscurrin-1.